We begin with the raw amino-acid sequence, 1071 residues long: Exportin-1 (1071 aa).

The Importin N-terminal domain maps to 46-112 (AQEVLTHLKE…KKYVVGLIIK (67 aa)). HEAT repeat units lie at residues 217–240 (QNAPLVHATLETLLRFLNWIPLGY), 241–277 (IFETKLISTLIYKFLNVPMFRNVSLKCLTEIAGVSVS), 354–472 (MLLV…YVDT), 515–553 (RFLVTVIKDLLGLCEQKRGKDNKAIIASNIMYIVGQYPR), 560–597 (KFLKTVVNKLFEFMHETHDGVQDMACDTFIKIAQKCRR), and 602–639 (VQVGEVMPFIDEILNNINTIICDLQPQQVHTFYEAVGY). The segment at 327–450 (CTFLKEHGQL…VREFMKDTDS (124 aa)) is necessary for interaction with Ran and nuclear export complex formation. Position 391 is a phosphoserine (S391). The interval 411–481 (TVLSKVRLLM…TEIIMTKKLQ (71 aa)) is necessary for interaction with RANBP3. K446 is modified (N6-acetyllysine). T448 carries the phosphothreonine modification. Phosphoserine is present on S450. Y454 carries the post-translational modification Phosphotyrosine. At K693 the chain carries N6-acetyllysine. 3 HEAT repeats span residues 775–813 (NFVPPLLDAVLIDYQRNVPAAREPEVLSTMAIIVNKLGG), 885–916 (TMRNVADTGLQILFTLLQNVAQEEAAAQSFYQ), and 917–954 (TYFCDILQHIFSVVTDTSHTAGLTMHASILAYMFNLVE). Phosphoserine occurs at positions 966 and 1031. The HEAT 10 repeat unit spans residues 1002–1039 (FSLNQDIPAFKEHLRDFLVQIKEFAGEDTSDLFLEERE).

The protein belongs to the exportin family. Found in a U snRNA export complex with PHAX/RNUXA, NCBP1/CBP80, NCBP2/CBP20, RAN, XPO1 and m7G-capped RNA. Component of a nuclear export receptor complex composed of KPNB1, RAN, SNUPN and XPO1. Found in a trimeric export complex with SNUPN, RAN and XPO1. Found in a nuclear export complex with RANBP3 and RAN. Found in a 60S ribosomal subunit export complex with NMD3, RAN, XPO1. Interacts with DDX3X, NMD3, NUP42, NUP88, NUP214, RANBP3 and TERT. Interacts with NEMF (via its N-terminus). Interacts with the monomeric form of BIRC5/survivin deacetylated at 'Lys-129'. Interacts with DTNBP1 and SERTAD2; the interactions translocate DTNBP1 and SERTAD2 out of the nucleus. Interacts with ATF2. Interacts with SLC35G1 and STIM1. Interacts with DCAF8. Interacts with CPEB3. Interacts with HAX1. Interacts with BOK; translocates to the cytoplasm. Interacts with HSP90AB1. Interacts with LRPPRC; interacts with LRPPRC alone and also when LRPPRC is in complex with EIF4E and with EIF4E sensitivity element (4ESE)-containing mRNAs to form an EIF4E-dependent mRNA export complex.

The protein localises to the cytoplasm. Its subcellular location is the nucleus. The protein resides in the nucleoplasm. It is found in the cajal body. It localises to the nucleolus. Its function is as follows. Mediates the nuclear export of cellular proteins (cargos) bearing a leucine-rich nuclear export signal (NES) and of RNAs. In the nucleus, in association with RANBP3, binds cooperatively to the NES on its target protein and to the GTPase Ran in its active GTP-bound form. Docking of this complex to the nuclear pore complex (NPC) is mediated through binding to nucleoporins. Upon transit of a nuclear export complex into the cytoplasm, disassembling of the complex and hydrolysis of Ran-GTP to Ran-GDP (induced by RANBP1 and RANGAP1, respectively) cause release of the cargo from the export receptor. The directionality of nuclear export is thought to be conferred by an asymmetric distribution of the GTP- and GDP-bound forms of Ran between the cytoplasm and nucleus. Involved in U3 snoRNA transport from Cajal bodies to nucleoli. Binds to late precursor U3 snoRNA bearing a TMG cap. The sequence is that of Exportin-1 (Xpo1) from Rattus norvegicus (Rat).